The following is a 362-amino-acid chain: Cytoskeleton protein RodZ (362 aa).

The Cytoplasmic segment spans residues 1–111 (MNTEASQDQT…LGKKHKKRDG (111 aa)). An HTH cro/C1-type domain is found at 19-79 (LRQARESLGL…KLVHLPEDEL (61 aa)). The segment at residues 30–49 (QQTVAERLCLKVSTIRDIEE) is a DNA-binding region (H-T-H motif). Residues 112-132 (WLMSFTWLIVLVVLGLTGAWW) form a helical; Signal-anchor for type II membrane protein membrane-spanning segment. At 133–362 (WQNHQAQQAE…RVARLTVGVE (230 aa)) the chain is on the periplasmic side. The tract at residues 151-277 (SAQLSQNGGQ…LPTADAGVSG (127 aa)) is disordered. The segment covering 193 to 221 (STSAVTNSATTSSATTSSVPTTSSVPKTT) has biased composition (low complexity). Residues 223 to 242 (VPKTNSTEPVDTANTNTTMH) are compositionally biased toward polar residues. A compositionally biased stretch (low complexity) spans 246-259 (AASAAVSPSQVPQP).

This sequence belongs to the RodZ family.

It localises to the cell inner membrane. Its function is as follows. Cytoskeletal protein that is involved in cell-shape control through regulation of the length of the long axis. The sequence is that of Cytoskeleton protein RodZ from Yersinia pseudotuberculosis serotype IB (strain PB1/+).